A 599-amino-acid chain; its full sequence is Aspartate--tRNA ligase (599 aa).

Glu175 is an L-aspartate binding site. An aspartate region spans residues 199 to 202; sequence QQFK. Residues Arg221 and His446 each contribute to the L-aspartate site. 221 to 223 is an ATP binding site; the sequence is RDE. Glu480 contributes to the ATP binding site. Arg487 contributes to the L-aspartate binding site. 532–535 lines the ATP pocket; it reads GVDR.

The protein belongs to the class-II aminoacyl-tRNA synthetase family. Type 1 subfamily. As to quaternary structure, homodimer.

The protein localises to the cytoplasm. It carries out the reaction tRNA(Asp) + L-aspartate + ATP = L-aspartyl-tRNA(Asp) + AMP + diphosphate. Its function is as follows. Catalyzes the attachment of L-aspartate to tRNA(Asp) in a two-step reaction: L-aspartate is first activated by ATP to form Asp-AMP and then transferred to the acceptor end of tRNA(Asp). The chain is Aspartate--tRNA ligase from Streptomyces griseus subsp. griseus (strain JCM 4626 / CBS 651.72 / NBRC 13350 / KCC S-0626 / ISP 5235).